Here is a 145-residue protein sequence, read N- to C-terminus: Cell wall teichoic acid glycosylation protein GtcA (145 aa).

4 helical membrane-spanning segments follow: residues 21-41, 45-65, 91-111, and 122-142; these read IFMYLIMGGFTTIINIVTFWL, ILNWDYRIANTIAFIASVLFA, FFGFRCLTYIIDILVMILLIS, and IWTNIIVLVLNYVFSKWIIFK.

Belongs to the GtrA family.

Its subcellular location is the cell membrane. Involved in the decoration of cell wall teichoic acid with galactose and glucose. The protein is Cell wall teichoic acid glycosylation protein GtcA (gtcA) of Listeria monocytogenes.